The following is a 390-amino-acid chain: Magnesium-protoporphyrin IX monomethyl ester [oxidative] cyclase (390 aa).

The protein belongs to the AcsF family. The cofactor is Fe cation.

The catalysed reaction is Mg-protoporphyrin IX 13-monomethyl ester + 3 NADPH + 3 O2 + 2 H(+) = 3,8-divinyl protochlorophyllide a + 3 NADP(+) + 5 H2O. It functions in the pathway porphyrin-containing compound metabolism; chlorophyll biosynthesis (light-independent). In terms of biological role, catalyzes the formation of the isocyclic ring in chlorophyll biosynthesis. Mediates the cyclase reaction, which results in the formation of divinylprotochlorophyllide (Pchlide) characteristic of all chlorophylls from magnesium-protoporphyrin IX 13-monomethyl ester (MgPMME). This chain is Magnesium-protoporphyrin IX monomethyl ester [oxidative] cyclase, found in Prochlorococcus marinus (strain MIT 9215).